Reading from the N-terminus, the 352-residue chain is RNA demethylase ALKBH5 (352 aa).

Over residues 18–34 (RDKVFEYSNGEKRKYRE) the composition is skewed to basic and acidic residues. The segment at 18–47 (RDKVFEYSNGEKRKYRESDDDESEYEERRD) is disordered. Residue Tyr107 is part of the active site. Asn161, Tyr163, and His172 together coordinate 2-oxoglutarate. Fe cation is bound by residues His172, Asp174, and His234. Cysteines 198 and 235 form a disulfide. Residues His234 and Arg245 each coordinate 2-oxoglutarate. A disordered region spans residues 260 to 352 (LDSNSLSPSI…PTRRVKMRRH (93 aa)). Residues 272–285 (PKRRHILKAKRSHR) show a composition bias toward basic residues. Composition is skewed to basic and acidic residues over residues 286-306 (KADPDAAHRPRVLEMDKELQR) and 315-343 (RHDDGSSENSWRRADDREPAARYTHDHAP).

The protein belongs to the alkB family. As to quaternary structure, monomer. The cofactor is Fe(2+).

Its subcellular location is the nucleus speckle. It catalyses the reaction an N(6)-methyladenosine in mRNA + 2-oxoglutarate + O2 = an adenosine in mRNA + formaldehyde + succinate + CO2. Functionally, dioxygenase that specifically demethylates N(6)-methyladenosine (m6A) RNA, the most prevalent internal modification of messenger RNA (mRNA) in higher eukaryotes. Demethylates RNA by oxidative demethylation, which requires molecular oxygen, alpha-ketoglutarate and iron. Demethylation of m6A mRNA affects mRNA processing, translation and export. In Danio rerio (Zebrafish), this protein is RNA demethylase ALKBH5 (alkbh5).